The sequence spans 547 residues: Chaperonin GroEL (547 aa).

ATP-binding positions include 30–33 (TLGP), Lys-51, 87–91 (DGTTT), Gly-415, 479–481 (NAA), and Asp-495.

Belongs to the chaperonin (HSP60) family. As to quaternary structure, forms a cylinder of 14 subunits composed of two heptameric rings stacked back-to-back. Interacts with the co-chaperonin GroES.

It is found in the cytoplasm. The catalysed reaction is ATP + H2O + a folded polypeptide = ADP + phosphate + an unfolded polypeptide.. Functionally, together with its co-chaperonin GroES, plays an essential role in assisting protein folding. The GroEL-GroES system forms a nano-cage that allows encapsulation of the non-native substrate proteins and provides a physical environment optimized to promote and accelerate protein folding. The sequence is that of Chaperonin GroEL from Pseudomonas syringae pv. tomato (strain ATCC BAA-871 / DC3000).